A 129-amino-acid polypeptide reads, in one-letter code: Small ribosomal subunit protein uS11 (129 aa).

The protein belongs to the universal ribosomal protein uS11 family. As to quaternary structure, part of the 30S ribosomal subunit. Interacts with proteins S7 and S18. Binds to IF-3.

Located on the platform of the 30S subunit, it bridges several disparate RNA helices of the 16S rRNA. Forms part of the Shine-Dalgarno cleft in the 70S ribosome. This chain is Small ribosomal subunit protein uS11, found in Methylobacterium radiotolerans (strain ATCC 27329 / DSM 1819 / JCM 2831 / NBRC 15690 / NCIMB 10815 / 0-1).